The chain runs to 337 residues: Biotin synthase (337 aa).

In terms of domain architecture, Radical SAM core spans 58–288 (AGSELLHACS…AHPHKIIKFA (231 aa)). Positions 76, 80, and 83 each coordinate [4Fe-4S] cluster. 3 residues coordinate [2Fe-2S] cluster: cysteine 155, cysteine 216, and lysine 286.

The protein belongs to the radical SAM superfamily. Biotin synthase family. As to quaternary structure, homodimer. The cofactor is [4Fe-4S] cluster. [2Fe-2S] cluster serves as cofactor.

The enzyme catalyses (4R,5S)-dethiobiotin + (sulfur carrier)-SH + 2 reduced [2Fe-2S]-[ferredoxin] + 2 S-adenosyl-L-methionine = (sulfur carrier)-H + biotin + 2 5'-deoxyadenosine + 2 L-methionine + 2 oxidized [2Fe-2S]-[ferredoxin]. It participates in cofactor biosynthesis; biotin biosynthesis; biotin from 7,8-diaminononanoate: step 2/2. Its function is as follows. Catalyzes the conversion of dethiobiotin (DTB) to biotin by the insertion of a sulfur atom into dethiobiotin via a radical-based mechanism. The protein is Biotin synthase of Pelodictyon phaeoclathratiforme (strain DSM 5477 / BU-1).